The primary structure comprises 625 residues: Alpha-amylase 1 (625 aa).

An N-terminal signal peptide occupies residues 1–22 (MGFSKIALFSLFALFGLPTSLA). The cysteines at positions 51 and 59 are disulfide-linked. W105 serves as a coordination point for substrate. N143 contacts Ca(2+). N153, N163, and N180 each carry an N-linked (GlcNAc...) asparagine glycan. A disulfide bridge links C172 with C187. Ca(2+) contacts are provided by E185 and D198. Substrate is bound at residue R227. Residue D229 coordinates Ca(2+). The Nucleophile role is filled by D229. 232-233 (KQ) is a substrate binding site. A glycan (N-linked (GlcNAc...) asparagine) is linked at N241. Position 253 (E253) interacts with Ca(2+). The Proton donor role is filled by E253. 2 N-linked (GlcNAc...) asparagine glycosylation sites follow: N260 and N286. Residues C263 and C306 are joined by a disulfide bond. Residue D322 participates in substrate binding. An N-linked (GlcNAc...) asparagine glycan is attached at N331. Position 370 (R370) interacts with substrate. N-linked (GlcNAc...) asparagine glycans are attached at residues N440 and N461. The tract at residues 526–579 (SATSSSKSSSSSSSRSGSSSSSSSRSGSTSSSGSSHTITSTSQSVHTSGSSTST) is disordered. S603 is lipidated: GPI-anchor amidated serine. A propeptide spans 604-625 (SANAVRVSILGVAAFIAIVLFI) (removed in mature form).

It belongs to the glycosyl hydrolase 13 family. Ca(2+) serves as cofactor.

It localises to the cell membrane. The enzyme catalyses Endohydrolysis of (1-&gt;4)-alpha-D-glucosidic linkages in polysaccharides containing three or more (1-&gt;4)-alpha-linked D-glucose units.. The chain is Alpha-amylase 1 (aah1) from Schizosaccharomyces pombe (strain 972 / ATCC 24843) (Fission yeast).